A 479-amino-acid chain; its full sequence is MASIRELHSQLVRKERSAVEIAEAALQRIETLEPQLKSFLHVTADQAIAQAKAVDQRIAAGEEISLLAGIPIGIKDNLCTRGIPTTCASKILQGFVPPYESTVTQRLAEAGAVAVGKTNLDEFAMGSSTENSAYQTTANPWDLTRVPGGSSGGSAAAVAADECVVALGSDTGGSIRQPAAFCGVVGLKPTYGLVSRYGLVAYASSLDQIGPFSRSVEDTAILLGAIAGHDPKDATSLKVEVPDYTQFLKPSLAGIKVGVITETVTDSPAGQAMQAALEVLQGLGAEIREISCPRFAYGLPAYYIIAPSEASANLARYDGVKYGYRVEEAETLIDMYCRTRAEGFGSEVKRRIMIGTYALSAGYYDAYYLKAQKVRTLIKQDFEAAFAEVDVLVSPTTPTTAFKAGEKTADPLSMYLSDLMTIPVNLAGLPGLSLPCGFDEAGLPYGLQIIGNVLREDQVLHTAYAYEQATEWHLRQPAL.

Catalysis depends on charge relay system residues Lys-75 and Ser-150. The active-site Acyl-ester intermediate is Ser-174.

This sequence belongs to the amidase family. GatA subfamily. In terms of assembly, heterotrimer of A, B and C subunits.

The catalysed reaction is L-glutamyl-tRNA(Gln) + L-glutamine + ATP + H2O = L-glutaminyl-tRNA(Gln) + L-glutamate + ADP + phosphate + H(+). Allows the formation of correctly charged Gln-tRNA(Gln) through the transamidation of misacylated Glu-tRNA(Gln) in organisms which lack glutaminyl-tRNA synthetase. The reaction takes place in the presence of glutamine and ATP through an activated gamma-phospho-Glu-tRNA(Gln). The polypeptide is Glutamyl-tRNA(Gln) amidotransferase subunit A (Synechococcus elongatus (strain ATCC 33912 / PCC 7942 / FACHB-805) (Anacystis nidulans R2)).